The chain runs to 144 residues: Maximins 3/H5 (144 aa).

The N-terminal stretch at 1 to 18 (MNFKYIFAVSFLIASAYA) is a signal peptide. 2 consecutive propeptides follow at residues 19 to 43 (RSVQ…REIR) and 74 to 123 (TAEE…KEKR). Position 143 is a leucine amide (L143).

The protein belongs to the bombinin family. Expressed by the skin glands.

Its subcellular location is the secreted. In terms of biological role, maximin-3 shows antibacterial activity against both Gram-positive and Gram-negative bacteria. It also shows antimicrobial activity against the fungus C.albicans, but not against A.flavus nor P.uticale. It has little hemolytic activity. It possess a significant cytotoxicity against tumor cell lines. It possess a significant anti-HIV activity. It shows high spermicidal activity. Maximin-H5 shows antibacterial activity only against the Gram-positive bacteria S.aureus. The other bacterial and fungal strains tested were resistant to it. The presence of metal ions, like Zn(2+) and Mg(2+), did not increase its antimicrobial potency. Does not show hemolytic activity (in a concentration up to 80 uM). The protein is Maximins 3/H5 of Bombina maxima (Giant fire-bellied toad).